A 251-amino-acid polypeptide reads, in one-letter code: Gamma-gliadin (251 aa).

An N-terminal signal peptide occupies residues 1–19 (MKTLLILTILAMAITIGTA). Residues 26-143 (SSQVQWPQQQ…QQSFPQQQPP (118 aa)) are disordered. Residues 42–81 (QPFSQQPQQTFPQPQQTFPHQPQQQFPQPQQPQQQFLQPQ) show a composition bias toward low complexity. Residues 82–99 (QPFPQQPQQPYPQQPQQP) show a composition bias toward pro residues. Low complexity predominate over residues 100 to 139 (FPQTQQPQQLFPQSQQPQQQFSQPQQQFPQPQQPQQSFPQ).

Belongs to the gliadin/glutenin family.

In terms of biological role, gliadin is the major seed storage protein in wheat. The sequence is that of Gamma-gliadin from Triticum aestivum (Wheat).